Consider the following 1154-residue polypeptide: BEACH domain-containing protein lvsF (1154 aa).

Disordered regions lie at residues 92-123 (HLPT…EQPS) and 139-167 (TSKV…PTPT). Residues 145–158 (PTPPTPTPTPPTPQ) show a composition bias toward pro residues. A BEACH-type PH domain is found at 289–384 (DMNERNILEL…TRNQVYDLLV (96 aa)). The BEACH domain maps to 389–697 (TNIMHINEQA…QIFKTPHPQR (309 aa)). Disordered regions lie at residues 554–575 (SFES…NFEN), 739–762 (NNLN…LNNN), and 779–825 (NSLN…ENLN). Composition is skewed to low complexity over residues 779 to 788 (NSLNNENNEN) and 795 to 822 (NSNS…NENE). WD repeat units lie at residues 858–897 (LHKD…QIRS), 900–939 (LCNL…ISYS), 942–980 (GHSD…NGAI), 992–1031 (DSDT…LIRR), 1034–1074 (CFFD…FSFK), 1076–1110 (KGEI…EIKD), and 1119–1154 (SSNE…IWQQ).

The chain is BEACH domain-containing protein lvsF (lvsF) from Dictyostelium discoideum (Social amoeba).